A 236-amino-acid chain; its full sequence is Octanoyltransferase (236 aa).

The BPL/LPL catalytic domain occupies 36–220 (DQVPDTVLLL…HLAAVLGASS (185 aa)). Substrate-binding positions include 76–83 (RGGKITWH), 150–152 (AIG), and 163–165 (GFA). The Acyl-thioester intermediate role is filled by Cys-181.

The protein belongs to the LipB family.

The protein localises to the cytoplasm. The enzyme catalyses octanoyl-[ACP] + L-lysyl-[protein] = N(6)-octanoyl-L-lysyl-[protein] + holo-[ACP] + H(+). It participates in protein modification; protein lipoylation via endogenous pathway; protein N(6)-(lipoyl)lysine from octanoyl-[acyl-carrier-protein]: step 1/2. Its function is as follows. Catalyzes the transfer of endogenously produced octanoic acid from octanoyl-acyl-carrier-protein onto the lipoyl domains of lipoate-dependent enzymes. Lipoyl-ACP can also act as a substrate although octanoyl-ACP is likely to be the physiological substrate. The sequence is that of Octanoyltransferase from Thermobifida fusca (strain YX).